Here is a 512-residue protein sequence, read N- to C-terminus: Cytochrome P450 monooxygenase astD (512 aa).

A helical membrane pass occupies residues Met19–Tyr39. N-linked (GlcNAc...) asparagine glycans are attached at residues Asn191 and Asn413. Cys449 is a heme binding site.

Belongs to the cytochrome P450 family. Heme is required as a cofactor.

Its subcellular location is the membrane. The protein operates within secondary metabolite biosynthesis; terpenoid biosynthesis. Its function is as follows. Cytochrome P450 monooxygenase; part of the gene cluster that mediates the biosynthesis of astellolides, drimane-type sesquiterpene esters that show antimicrobial, anti-inflammatory, and anti-tumor activities. The first step in astellolide biosynthesis is performed by the sesquiterpene cyclase astC that catalyzes the formation of drimanyl pyrophosphate from farnesyl pyrophosphate. Drimanyl pyrophosphate is then dephosphorylated by the sesquiterpene phosphatase astI to produce drimanyl monophosphate which is further dephosphorylated to drim-8-ene-11-ol by atsK. Drim-8-ene-11-ol is converted to confertifolin, probably by the cytochrome P450 monooxygenase astD and/or the dehydrogenase astE. The cytochrome P450 monooxygenases astB, astF and astJ then hydroxylate confertifolin at C6, C14, or C15 to form trihydroxy confertifolin. The nonribosomal peptide synthetase astA catalyzes ester bond formation between trihydroxy contifolin and benzoic acid (BA) or 4-hydroxy benzoic acid (4HBA), leading to the formation of dideacetyl astellolides A and B, respectively. Finally, the O-acetyltransferase astG converts dideacetyl astellolides A and B into deacetyl astellolides A and B. This is Cytochrome P450 monooxygenase astD from Aspergillus oryzae (strain ATCC 42149 / RIB 40) (Yellow koji mold).